The chain runs to 410 residues: Schlafen-like protein 1 (410 aa).

Disordered stretches follow at residues 1–20 and 141–199; these read MSLR…VMSQ and LHHR…SGVR. Over residues 8 to 20 the composition is skewed to polar residues; that stretch reads AQTQMWESPVMSQ. The segment covering 154 to 173 has biased composition (pro residues); that stretch reads SHSPGPSPGPSPGLRHPPLP. An ATP-binding site is contributed by 264–271; that stretch reads GVEDSGLV. Residues 370–401 adopt a coiled-coil conformation; sequence QKWAMELGKLEEKVKVLTLEKEQLQQQLRQRQ.

It belongs to the Schlafen family. Subgroup I subfamily.

In Mus musculus (Mouse), this protein is Schlafen-like protein 1 (Slfnl1).